Here is a 753-residue protein sequence, read N- to C-terminus: 5-methyltetrahydropteroyltriglutamate--homocysteine methyltransferase (753 aa).

5-methyltetrahydropteroyltri-L-glutamate is bound by residues 17–20 (RELK) and Lys-117. L-homocysteine is bound by residues 431 to 433 (IGS) and Glu-484. L-methionine-binding positions include 431–433 (IGS) and Glu-484. Residues 515 to 516 (RC) and Trp-561 each bind 5-methyltetrahydropteroyltri-L-glutamate. Asp-599 is an L-homocysteine binding site. Asp-599 serves as a coordination point for L-methionine. A 5-methyltetrahydropteroyltri-L-glutamate-binding site is contributed by Glu-605. His-641, Cys-643, and Glu-665 together coordinate Zn(2+). The Proton donor role is filled by His-694. Residue Cys-726 participates in Zn(2+) binding.

This sequence belongs to the vitamin-B12 independent methionine synthase family. Zn(2+) is required as a cofactor.

It carries out the reaction 5-methyltetrahydropteroyltri-L-glutamate + L-homocysteine = tetrahydropteroyltri-L-glutamate + L-methionine. It participates in amino-acid biosynthesis; L-methionine biosynthesis via de novo pathway; L-methionine from L-homocysteine (MetE route): step 1/1. Functionally, catalyzes the transfer of a methyl group from 5-methyltetrahydrofolate to homocysteine resulting in methionine formation. The polypeptide is 5-methyltetrahydropteroyltriglutamate--homocysteine methyltransferase (Escherichia coli O1:K1 / APEC).